Here is a 136-residue protein sequence, read N- to C-terminus: MGWSCIIFFLVATATGVHSQVQLQQSGPEVVRPGVSVKISCKGSGYTFTDYAMHWVKQSHAKSLEWIGVISTYNGNTSYNQKFKGKATMTVDKSSSTVHMELARLTSEDSANLYCARYYGNYFDYWGQGTTLTVSS.

Positions 1–19 are cleaved as a signal peptide; the sequence is MGWSCIIFFLVATATGVHS. Residues 20-135 form the Ig-like domain; sequence QVQLQQSGPE…WGQGTTLTVS (116 aa).

In Mus musculus (Mouse), this protein is Ig heavy chain V region BCL1.